The primary structure comprises 175 residues: Small ribosomal subunit protein uS5 (175 aa).

Positions 11 to 74 constitute an S5 DRBM domain; it reads LSEVLVDVNR…QAAKKRMMKV (64 aa).

This sequence belongs to the universal ribosomal protein uS5 family. Part of the 30S ribosomal subunit. Contacts proteins S4 and S8.

Functionally, with S4 and S12 plays an important role in translational accuracy. Located at the back of the 30S subunit body where it stabilizes the conformation of the head with respect to the body. This Rickettsia typhi (strain ATCC VR-144 / Wilmington) protein is Small ribosomal subunit protein uS5.